A 160-amino-acid chain; its full sequence is uncharacterized protein (160 aa).

This is an uncharacterized protein from Magallana gigas (Pacific oyster).